Consider the following 78-residue polypeptide: MAAHCQVTGAEPGFGHSISHSHRRNKRRFDPNIQKKRYWVPSLRRNVTLQVSARGIKTIDVRGIDVVVAAILARGVKL.

Residues 1–31 (MAAHCQVTGAEPGFGHSISHSHRRNKRRFDP) form a disordered region.

The protein belongs to the bacterial ribosomal protein bL28 family.

This is Large ribosomal subunit protein bL28 from Arthrobacter sp. (strain FB24).